Here is a 232-residue protein sequence, read N- to C-terminus: 2-C-methyl-D-erythritol 4-phosphate cytidylyltransferase (232 aa).

Belongs to the IspD/TarI cytidylyltransferase family. IspD subfamily.

The enzyme catalyses 2-C-methyl-D-erythritol 4-phosphate + CTP + H(+) = 4-CDP-2-C-methyl-D-erythritol + diphosphate. The protein operates within isoprenoid biosynthesis; isopentenyl diphosphate biosynthesis via DXP pathway; isopentenyl diphosphate from 1-deoxy-D-xylulose 5-phosphate: step 2/6. Its function is as follows. Catalyzes the formation of 4-diphosphocytidyl-2-C-methyl-D-erythritol from CTP and 2-C-methyl-D-erythritol 4-phosphate (MEP). The protein is 2-C-methyl-D-erythritol 4-phosphate cytidylyltransferase of Shewanella frigidimarina (strain NCIMB 400).